A 200-amino-acid polypeptide reads, in one-letter code: NADH-quinone oxidoreductase subunit B 2 (200 aa).

Residues Cys-79, Cys-80, Cys-144, and Cys-174 each contribute to the [4Fe-4S] cluster site.

The protein belongs to the complex I 20 kDa subunit family. NDH-1 is composed of 14 different subunits. Subunits NuoB, C, D, E, F, and G constitute the peripheral sector of the complex. [4Fe-4S] cluster is required as a cofactor.

The protein localises to the cell inner membrane. It carries out the reaction a quinone + NADH + 5 H(+)(in) = a quinol + NAD(+) + 4 H(+)(out). In terms of biological role, NDH-1 shuttles electrons from NADH, via FMN and iron-sulfur (Fe-S) centers, to quinones in the respiratory chain. The immediate electron acceptor for the enzyme in this species is believed to be ubiquinone. Couples the redox reaction to proton translocation (for every two electrons transferred, four hydrogen ions are translocated across the cytoplasmic membrane), and thus conserves the redox energy in a proton gradient. The protein is NADH-quinone oxidoreductase subunit B 2 of Rhodopseudomonas palustris (strain BisA53).